A 284-amino-acid chain; its full sequence is Halorhodopsin (284 aa).

Topologically, residues 1-30 are extracellular; it reads MIETAAADILAGGMVPLEMTQTQIFEAVQS. The helical transmembrane segment at 31-56 threads the bilayer; that stretch reads DTLLASSLWINIALAGLSILLFVYMG. Residues 57–62 are Cytoplasmic-facing; it reads RNVEDP. Residues 63–86 form a helical membrane-spanning segment; it reads RAQLIFVATLMVPLVSISSYTGLV. Residues 87 to 110 lie on the Extracellular side of the membrane; that stretch reads SGLTVSFLEMPAGHALAGQEVLTP. The chain crosses the membrane as a helical span at residues 111-132; that stretch reads WGRYLTWALSTPMILIAVGLLA. The Cytoplasmic segment spans residues 133–135; the sequence is GSN. The helical transmembrane segment at 136–159 threads the bilayer; sequence TTKLFTAVVADIGMCVTGLAAALT. At 160-162 the chain is on the extracellular side; that stretch reads TSS. The chain crosses the membrane as a helical span at residues 163 to 185; that stretch reads YLLRWVWYAISCAFFVVVLYILL. The Cytoplasmic segment spans residues 186–197; the sequence is AEWAEDAEIAGT. A helical transmembrane segment spans residues 198-221; it reads ADIFNTLKVLTVVLWLGYPIFWAL. Residues 222–230 lie on the Extracellular side of the membrane; the sequence is GAEGLAVLD. The helical transmembrane segment at 231–259 threads the bilayer; sequence VAITSWAYSGMDIVAKYLFAFLLLRWVVN. Lys246 carries the post-translational modification N6-(retinylidene)lysine. Residues 260–284 are Cytoplasmic-facing; sequence NERTVADVASGLGSGSRGGAAPADD.

The protein belongs to the archaeal/bacterial/fungal opsin family.

The protein resides in the cell membrane. Its function is as follows. Light-driven chloride pump. This Halobacterium sp. (strain SG1) protein is Halorhodopsin (hop).